The sequence spans 44 residues: Large ribosomal subunit protein bL36 (44 aa).

It belongs to the bacterial ribosomal protein bL36 family.

The chain is Large ribosomal subunit protein bL36 from Pseudoalteromonas translucida (strain TAC 125).